Here is a 94-residue protein sequence, read N- to C-terminus: Co-chaperonin GroES (94 aa).

This sequence belongs to the GroES chaperonin family. In terms of assembly, heptamer of 7 subunits arranged in a ring. Interacts with the chaperonin GroEL.

It localises to the cytoplasm. Together with the chaperonin GroEL, plays an essential role in assisting protein folding. The GroEL-GroES system forms a nano-cage that allows encapsulation of the non-native substrate proteins and provides a physical environment optimized to promote and accelerate protein folding. GroES binds to the apical surface of the GroEL ring, thereby capping the opening of the GroEL channel. The chain is Co-chaperonin GroES from Streptococcus pneumoniae serotype 19F (strain G54).